Consider the following 765-residue polypeptide: BRCA1-associated RING domain protein 1 (765 aa).

The interval 20 to 113 is required for BRCA1 binding; the sequence is MEPATDGLWA…KLQNLLHDNK (94 aa). The RING-type zinc finger occupies 44–81; the sequence is CSRCANILKEPVCLGGCEHIFCSGCISDCVGSGCPVCY. Lys-152 participates in a covalent cross-link: Glycyl lysine isopeptide (Lys-Gly) (interchain with G-Cter in SUMO2). Disordered stretches follow at residues 183–229, 299–328, and 369–410; these read AVPK…EELK, KDLRSGGSNGNRKGCHRPTTSTSDSCGSNI, and NASD…MPAR. A compositionally biased stretch (basic residues) spans 195-204; the sequence is SAKKHPKKSV. Basic and acidic residues predominate over residues 207 to 229; sequence INREENLRPETKDSRFDSKEELK. Polar residues predominate over residues 316 to 328; sequence PTTSTSDSCGSNI. At Ser-378 the chain carries Phosphoserine. The residue at position 381 (Thr-381) is a Phosphothreonine. A compositionally biased stretch (polar residues) spans 391 to 403; the sequence is HRQMMSSPSTVKL. Lys-411 is covalently cross-linked (Glycyl lysine isopeptide (Lys-Gly) (interchain with G-Cter in SUMO2)). ANK repeat units lie at residues 415–447, 448–480, and 481–513; these read RGETLLHIASIKGDIPSVEYLLQNGNDPNVKDH, AGWTPLHEACSHGHLKVVELLLQHNALVNTPGY, and QNDSPLHDAVKSGHIDIVKVLLSHGASRNAVNI. One copy of the ANK 4; degenerate repeat lies at 514 to 534; that stretch reads FGVRPVDYTDNENIRSLLLLP. The segment at 542 to 546 is flexible linker; the sequence is TSQCS. BRCT domains follow at residues 549 to 641 and 655 to 765; these read NTGQ…KYEV and LLPK…PLDS.

As to quaternary structure, homo- and heterodimer. Heterodimer (RING-type zinc finger) with BRCA1. Heterodimer (via ANK repeats and BRCT domains) with CSTF1/CSTF-50. Component of the BRCA1-A complex, at least composed of the BRCA1, BARD1, UIMC1/RAP80, ABRAXAS1, BRCC3/BRCC36, BABAM2 and BABAM1/NBA1. Interacts with UBXN1. Processed during apoptosis. The homodimer is more susceptible to proteolytic cleavage than the BARD1/BRCA1 heterodimer.

The protein resides in the nucleus. It is found in the cytoplasm. The catalysed reaction is S-ubiquitinyl-[E2 ubiquitin-conjugating enzyme]-L-cysteine + [acceptor protein]-L-lysine = [E2 ubiquitin-conjugating enzyme]-L-cysteine + N(6)-ubiquitinyl-[acceptor protein]-L-lysine.. It functions in the pathway protein modification; protein ubiquitination. Functionally, E3 ubiquitin-protein ligase. The BRCA1-BARD1 heterodimer specifically mediates the formation of 'Lys-6'-linked polyubiquitin chains and coordinates a diverse range of cellular pathways such as DNA damage repair, ubiquitination and transcriptional regulation to maintain genomic stability. Plays a central role in the control of the cell cycle in response to DNA damage. Acts by mediating ubiquitin E3 ligase activity that is required for its tumor suppressor function. Also forms a heterodimer with CSTF1/CSTF-50 to modulate mRNA processing and RNAP II stability by inhibiting pre-mRNA 3' cleavage. This is BRCA1-associated RING domain protein 1 (Bard1) from Mus musculus (Mouse).